The following is a 189-amino-acid chain: Elongation factor P (189 aa).

Belongs to the elongation factor P family.

The protein resides in the cytoplasm. Its pathway is protein biosynthesis; polypeptide chain elongation. Involved in peptide bond synthesis. Stimulates efficient translation and peptide-bond synthesis on native or reconstituted 70S ribosomes in vitro. Probably functions indirectly by altering the affinity of the ribosome for aminoacyl-tRNA, thus increasing their reactivity as acceptors for peptidyl transferase. This is Elongation factor P from Rhizobium rhizogenes (strain K84 / ATCC BAA-868) (Agrobacterium radiobacter).